Here is a 209-residue protein sequence, read N- to C-terminus: Protein-L-isoaspartate O-methyltransferase (209 aa).

The active site involves Ser59.

It belongs to the methyltransferase superfamily. L-isoaspartyl/D-aspartyl protein methyltransferase family.

It is found in the cytoplasm. The enzyme catalyses [protein]-L-isoaspartate + S-adenosyl-L-methionine = [protein]-L-isoaspartate alpha-methyl ester + S-adenosyl-L-homocysteine. In terms of biological role, catalyzes the methyl esterification of L-isoaspartyl residues in peptides and proteins that result from spontaneous decomposition of normal L-aspartyl and L-asparaginyl residues. It plays a role in the repair and/or degradation of damaged proteins. This is Protein-L-isoaspartate O-methyltransferase from Helicobacter pylori (strain G27).